The chain runs to 454 residues: UPF0210 protein EUBELI_01067 (454 aa).

Belongs to the UPF0210 family. As to quaternary structure, homodimer.

The sequence is that of UPF0210 protein EUBELI_01067 from Lachnospira eligens (strain ATCC 27750 / DSM 3376 / VPI C15-48 / C15-B4) (Eubacterium eligens).